The sequence spans 269 residues: Putative imidazole glycerol phosphate synthase subunit hisF2 (269 aa).

D133 is a catalytic residue.

Belongs to the HisA/HisF family. In terms of assembly, heterodimer of HisH and HisF.

The protein resides in the cytoplasm. The catalysed reaction is 5-[(5-phospho-1-deoxy-D-ribulos-1-ylimino)methylamino]-1-(5-phospho-beta-D-ribosyl)imidazole-4-carboxamide + L-glutamine = D-erythro-1-(imidazol-4-yl)glycerol 3-phosphate + 5-amino-1-(5-phospho-beta-D-ribosyl)imidazole-4-carboxamide + L-glutamate + H(+). It functions in the pathway amino-acid biosynthesis; L-histidine biosynthesis; L-histidine from 5-phospho-alpha-D-ribose 1-diphosphate: step 5/9. In terms of biological role, IGPS catalyzes the conversion of PRFAR and glutamine to IGP, AICAR and glutamate. The HisF subunit catalyzes the cyclization activity that produces IGP and AICAR from PRFAR using the ammonia provided by the HisH subunit. The sequence is that of Putative imidazole glycerol phosphate synthase subunit hisF2 (hisF2) from Parasynechococcus marenigrum (strain WH8102).